The following is a 197-amino-acid chain: Holliday junction branch migration complex subunit RuvA (197 aa).

The interval 1–64 (MYEYIKGKYI…EDFIGVYGFL (64 aa)) is domain I. The domain II stretch occupies residues 65-144 (TKDELSMFKL…DILEEDDEQI (80 aa)). The flexible linker stretch occupies residues 145–149 (INKVA). The tract at residues 149–197 (ADDKKVLEAVAALVTLGYSEKEANKVINSCDKNNSLEQIIKEALKYLMK) is domain III.

This sequence belongs to the RuvA family. In terms of assembly, homotetramer. Forms an RuvA(8)-RuvB(12)-Holliday junction (HJ) complex. HJ DNA is sandwiched between 2 RuvA tetramers; dsDNA enters through RuvA and exits via RuvB. An RuvB hexamer assembles on each DNA strand where it exits the tetramer. Each RuvB hexamer is contacted by two RuvA subunits (via domain III) on 2 adjacent RuvB subunits; this complex drives branch migration. In the full resolvosome a probable DNA-RuvA(4)-RuvB(12)-RuvC(2) complex forms which resolves the HJ.

It is found in the cytoplasm. Its function is as follows. The RuvA-RuvB-RuvC complex processes Holliday junction (HJ) DNA during genetic recombination and DNA repair, while the RuvA-RuvB complex plays an important role in the rescue of blocked DNA replication forks via replication fork reversal (RFR). RuvA specifically binds to HJ cruciform DNA, conferring on it an open structure. The RuvB hexamer acts as an ATP-dependent pump, pulling dsDNA into and through the RuvAB complex. HJ branch migration allows RuvC to scan DNA until it finds its consensus sequence, where it cleaves and resolves the cruciform DNA. The sequence is that of Holliday junction branch migration complex subunit RuvA from Clostridium botulinum (strain ATCC 19397 / Type A).